A 521-amino-acid polypeptide reads, in one-letter code: Maturase K (521 aa).

This sequence belongs to the intron maturase 2 family. MatK subfamily.

Its subcellular location is the plastid. Functionally, usually encoded in the trnK tRNA gene intron. Probably assists in splicing its own and other chloroplast group II introns. This Cuscuta exaltata (Tall dodder) protein is Maturase K.